An 841-amino-acid chain; its full sequence is DNA ligase (841 aa).

Residues 54 to 58 (DAEYD), 103 to 104 (SL), and Glu-143 contribute to the NAD(+) site. Lys-145 serves as the catalytic N6-AMP-lysine intermediate. Arg-166, Glu-203, Lys-321, and Lys-345 together coordinate NAD(+). Residues Cys-471, Cys-474, Cys-489, and Cys-495 each contribute to the Zn(2+) site. Residues 554-575 (KTVAESDQMPSEGSSVGASGKH) form a disordered region. A compositionally biased stretch (polar residues) spans 561 to 570 (QMPSEGSSVG). The 78-residue stretch at 764–841 (GINKAVAGKT…SEAELLTLLG (78 aa)) folds into the BRCT domain.

Belongs to the NAD-dependent DNA ligase family. LigA subfamily. The cofactor is Mg(2+). Mn(2+) is required as a cofactor.

The enzyme catalyses NAD(+) + (deoxyribonucleotide)n-3'-hydroxyl + 5'-phospho-(deoxyribonucleotide)m = (deoxyribonucleotide)n+m + AMP + beta-nicotinamide D-nucleotide.. Functionally, DNA ligase that catalyzes the formation of phosphodiester linkages between 5'-phosphoryl and 3'-hydroxyl groups in double-stranded DNA using NAD as a coenzyme and as the energy source for the reaction. It is essential for DNA replication and repair of damaged DNA. This chain is DNA ligase, found in Neisseria meningitidis serogroup C / serotype 2a (strain ATCC 700532 / DSM 15464 / FAM18).